We begin with the raw amino-acid sequence, 257 residues long: Pyridoxal phosphate homeostasis protein (257 aa).

K47 bears the N6-(pyridoxal phosphate)lysine mark.

Belongs to the pyridoxal phosphate-binding protein YggS/PROSC family.

In terms of biological role, pyridoxal 5'-phosphate (PLP)-binding protein, which is involved in PLP homeostasis. The sequence is that of Pyridoxal phosphate homeostasis protein from Mycobacterium leprae (strain TN).